Consider the following 286-residue polypeptide: Transcription factor bHLH11 (286 aa).

The segment at 1–34 is disordered; it reads MDQPMKPKTCSESDFADDSSASSSSSSGQNLRGA. The segment covering 18–27 has biased composition (low complexity); the sequence is DSSASSSSSS. In terms of domain architecture, bHLH spans 44–94; it reads AVCSQKAEREKLRRDKLKEQFLELGNALDPNRPKSDKASVLTDTIQMLKDV. Disordered regions lie at residues 182-202 and 244-286; these read EQQASVQQHSSSSADASMKQD and QQDV…MLKP. Low complexity-rich tracts occupy residues 183-198 and 255-269; these read QQASVQQHSSSSADAS and SLTTTASSSNSYSLS. Over residues 270 to 279 the composition is skewed to polar residues; the sequence is QAVQDSSPGT.

Homodimer. As to expression, expressed consitutively in roots, leaves, stems, and flowers.

The protein resides in the nucleus. The protein is Transcription factor bHLH11 (BHLH11) of Arabidopsis thaliana (Mouse-ear cress).